A 600-amino-acid chain; its full sequence is Aspartate--tRNA(Asp/Asn) ligase (600 aa).

L-aspartate is bound at residue E174. The aspartate stretch occupies residues 198–201 (QLFK). R220 is an L-aspartate binding site. ATP contacts are provided by residues 220–222 (RDE) and Q229. H457 contributes to the L-aspartate binding site. E491 lines the ATP pocket. R498 lines the L-aspartate pocket. 543 to 546 (GLDR) is a binding site for ATP.

The protein belongs to the class-II aminoacyl-tRNA synthetase family. Type 1 subfamily. As to quaternary structure, homodimer.

Its subcellular location is the cytoplasm. The catalysed reaction is tRNA(Asx) + L-aspartate + ATP = L-aspartyl-tRNA(Asx) + AMP + diphosphate. Functionally, aspartyl-tRNA synthetase with relaxed tRNA specificity since it is able to aspartylate not only its cognate tRNA(Asp) but also tRNA(Asn). Reaction proceeds in two steps: L-aspartate is first activated by ATP to form Asp-AMP and then transferred to the acceptor end of tRNA(Asp/Asn). This Burkholderia orbicola (strain AU 1054) protein is Aspartate--tRNA(Asp/Asn) ligase.